The chain runs to 341 residues: Ketol-acid reductoisomerase (NADP(+)) (341 aa).

Residues 1 to 182 form the KARI N-terminal Rossmann domain; the sequence is MTEMFYDDDA…GGTRAGVIKT (182 aa). NADP(+) contacts are provided by residues 25–28, Lys-48, Ser-51, Ser-53, and 83–86; these read YGSQ and DQHQ. His-108 is an active-site residue. Position 134 (Gly-134) interacts with NADP(+). Positions 183-328 constitute a KARI C-terminal knotted domain; it reads TFTEETETDL…RELRSLFSWQ (146 aa). Mg(2+) is bound by residues Asp-191, Glu-195, Glu-227, and Glu-231. Ser-252 serves as a coordination point for substrate.

The protein belongs to the ketol-acid reductoisomerase family. Mg(2+) is required as a cofactor.

It catalyses the reaction (2R)-2,3-dihydroxy-3-methylbutanoate + NADP(+) = (2S)-2-acetolactate + NADPH + H(+). The enzyme catalyses (2R,3R)-2,3-dihydroxy-3-methylpentanoate + NADP(+) = (S)-2-ethyl-2-hydroxy-3-oxobutanoate + NADPH + H(+). Its pathway is amino-acid biosynthesis; L-isoleucine biosynthesis; L-isoleucine from 2-oxobutanoate: step 2/4. It functions in the pathway amino-acid biosynthesis; L-valine biosynthesis; L-valine from pyruvate: step 2/4. Involved in the biosynthesis of branched-chain amino acids (BCAA). Catalyzes an alkyl-migration followed by a ketol-acid reduction of (S)-2-acetolactate (S2AL) to yield (R)-2,3-dihydroxy-isovalerate. In the isomerase reaction, S2AL is rearranged via a Mg-dependent methyl migration to produce 3-hydroxy-3-methyl-2-ketobutyrate (HMKB). In the reductase reaction, this 2-ketoacid undergoes a metal-dependent reduction by NADPH to yield (R)-2,3-dihydroxy-isovalerate. This is Ketol-acid reductoisomerase (NADP(+)) from Pseudarthrobacter chlorophenolicus (strain ATCC 700700 / DSM 12829 / CIP 107037 / JCM 12360 / KCTC 9906 / NCIMB 13794 / A6) (Arthrobacter chlorophenolicus).